The following is a 342-amino-acid chain: 4-hydroxythreonine-4-phosphate dehydrogenase (342 aa).

Substrate-binding residues include H140 and T141. Residues H175, H220, and H275 each coordinate a divalent metal cation. Residues K283, N292, and R301 each contribute to the substrate site.

This sequence belongs to the PdxA family. In terms of assembly, homodimer. Zn(2+) serves as cofactor. The cofactor is Mg(2+). Co(2+) is required as a cofactor.

It is found in the cytoplasm. It catalyses the reaction 4-(phosphooxy)-L-threonine + NAD(+) = 3-amino-2-oxopropyl phosphate + CO2 + NADH. It participates in cofactor biosynthesis; pyridoxine 5'-phosphate biosynthesis; pyridoxine 5'-phosphate from D-erythrose 4-phosphate: step 4/5. Its function is as follows. Catalyzes the NAD(P)-dependent oxidation of 4-(phosphooxy)-L-threonine (HTP) into 2-amino-3-oxo-4-(phosphooxy)butyric acid which spontaneously decarboxylates to form 3-amino-2-oxopropyl phosphate (AHAP). The sequence is that of 4-hydroxythreonine-4-phosphate dehydrogenase from Rhizobium meliloti (strain 1021) (Ensifer meliloti).